A 500-amino-acid polypeptide reads, in one-letter code: Centrosomal protein of 57 kDa (500 aa).

The segment covering 1–17 (MAAASVSAASGSHLSNS) has biased composition (low complexity). 2 disordered regions span residues 1 to 34 (MAAA…HSSS) and 43 to 62 (KPFL…LAYP). The span at 18-34 (FAEPSRSNGSMVRHSSS) shows a compositional bias: polar residues. Phosphoserine occurs at positions 53 and 55. Positions 58–239 (TLAYPESNSR…KAAELQTGLE (182 aa)) are centrosome localization domain (CLD). 2 coiled-coil regions span residues 63 to 242 (ESNS…ETNR) and 392 to 492 (ELKD…NSLQ). The tract at residues 277–491 (GAQPHYRLCL…KDMQSIQNSL (215 aa)) is mediates interaction with microtubules. Residues 434 to 450 (KKELKATKKTLDEERNS) show a composition bias toward basic and acidic residues. Residues 434–472 (KKELKATKKTLDEERNSSSRSGITGTTNKKDFMKLRPGE) form a disordered region. Residues 451 to 460 (SSRSGITGTT) are compositionally biased toward polar residues. A compositionally biased stretch (basic and acidic residues) spans 461–471 (NKKDFMKLRPG).

The protein belongs to the translokin family. In terms of assembly, homodimer and homooligomer. Interacts with microtubules. Interacts with FGF2 and RAP80. Does not interact with FGF1 or FGF2 isoform 24 kDa. In terms of tissue distribution, ubiquitous.

Its subcellular location is the nucleus. The protein localises to the cytoplasm. It localises to the cytoskeleton. The protein resides in the microtubule organizing center. It is found in the centrosome. Functionally, centrosomal protein which may be required for microtubule attachment to centrosomes. May act by forming ring-like structures around microtubules. Mediates nuclear translocation and mitogenic activity of the internalized growth factor FGF2, but that of FGF1. In Homo sapiens (Human), this protein is Centrosomal protein of 57 kDa (CEP57).